The primary structure comprises 829 residues: Periplasmic nitrate reductase (829 aa).

Positions 1–29 (MKMTRRAFVKANAAASAAAVAGVTLPATA) form a signal peptide, tat-type signal. The 4Fe-4S Mo/W bis-MGD-type domain occupies 41–97 (ITWDKAPCRFCGTGCSVLVGTQNGKVVATQGDPEAPVNKGLNCIKGYFLSKIMYGKD). 4 residues coordinate [4Fe-4S] cluster: Cys48, Cys51, Cys55, and Cys83. Residues Lys85, Gln152, Asn177, Cys181, 214 to 221 (WGSNMAEM), 245 to 249 (STYYH), 264 to 266 (QSD), Met374, Gln378, Asn484, 510 to 511 (SD), Lys533, Asp560, and 718 to 727 (TGRVLEHWHT) contribute to the Mo-bis(molybdopterin guanine dinucleotide) site. Phe794 serves as a coordination point for substrate. Residues Asn802 and Lys819 each coordinate Mo-bis(molybdopterin guanine dinucleotide).

Belongs to the prokaryotic molybdopterin-containing oxidoreductase family. NasA/NapA/NarB subfamily. Component of the periplasmic nitrate reductase NapAB complex composed of NapA and NapB. [4Fe-4S] cluster is required as a cofactor. Requires Mo-bis(molybdopterin guanine dinucleotide) as cofactor. Post-translationally, predicted to be exported by the Tat system. The position of the signal peptide cleavage has not been experimentally proven.

The protein resides in the periplasm. The catalysed reaction is 2 Fe(II)-[cytochrome] + nitrate + 2 H(+) = 2 Fe(III)-[cytochrome] + nitrite + H2O. Functionally, catalytic subunit of the periplasmic nitrate reductase complex NapAB. Receives electrons from NapB and catalyzes the reduction of nitrate to nitrite. This is Periplasmic nitrate reductase from Vibrio atlanticus (strain LGP32) (Vibrio splendidus (strain Mel32)).